Consider the following 623-residue polypeptide: Glutathione import ATP-binding protein GsiA (623 aa).

2 consecutive ABC transporter domains span residues 18–272 (VRNL…QGLL) and 317–567 (LQVS…RKLM). ATP contacts are provided by residues 52–59 (GESGSGKS) and 360–367 (GESGCGKS).

This sequence belongs to the ABC transporter superfamily. Glutathione importer (TC 3.A.1.5.11) family. As to quaternary structure, the complex is composed of two ATP-binding proteins (GsiA), two transmembrane proteins (GsiC and GsiD) and a solute-binding protein (GsiB).

The protein localises to the cell inner membrane. It catalyses the reaction glutathione(out) + ATP + H2O = glutathione(in) + ADP + phosphate + H(+). Functionally, part of the ABC transporter complex GsiABCD involved in glutathione import. Responsible for energy coupling to the transport system. The protein is Glutathione import ATP-binding protein GsiA of Pectobacterium atrosepticum (strain SCRI 1043 / ATCC BAA-672) (Erwinia carotovora subsp. atroseptica).